Consider the following 316-residue polypeptide: Heme oxygenase 2 (316 aa).

Positions 1 to 12 (MSAEVETSEGVD) are enriched in acidic residues. The tract at residues 1–29 (MSAEVETSEGVDESEKKNSGALEKENQMR) is disordered. Ser2 carries the N-acetylserine modification. Phosphoserine is present on Ser2. Basic and acidic residues predominate over residues 13–27 (ESEKKNSGALEKENQ). His45 is a heme b binding site. HRM repeat units follow at residues 264 to 269 (KCPFYA) and 281 to 286 (SCPFRT). Residues Cys265 and Cys282 each carry the S-nitrosocysteine modification.

This sequence belongs to the heme oxygenase family. Post-translationally, S-nitrosylated by BLVRB.

It is found in the microsome. It localises to the endoplasmic reticulum. The catalysed reaction is heme b + 3 reduced [NADPH--hemoprotein reductase] + 3 O2 = biliverdin IXalpha + CO + Fe(2+) + 3 oxidized [NADPH--hemoprotein reductase] + 3 H2O + H(+). Heme oxygenase cleaves the heme ring at the alpha methene bridge to form biliverdin. Biliverdin is subsequently converted to bilirubin by biliverdin reductase. Under physiological conditions, the activity of heme oxygenase is highest in the spleen, where senescent erythrocytes are sequestrated and destroyed. Heme oxygenase 2 could be implicated in the production of carbon monoxide in brain where it could act as a neurotransmitter. The polypeptide is Heme oxygenase 2 (HMOX2) (Macaca fascicularis (Crab-eating macaque)).